The primary structure comprises 267 residues: Phyllosphere-induced regulator PhyR (267 aa).

A Response regulatory domain is found at 139–253 (EILIIEDEPL…NVSAVISQAL (115 aa)). The residue at position 190 (Asp190) is a 4-aspartylphosphate.

Its function is as follows. Key regulator for adaptation to epiphytic life (leaf colonizing) of the bacterium. Positively regulates several genes including katE, sodA, hsp20, dps and gloA. However, it is not known whether this regulation is direct or indirect. Also induces several dehydrogenases. The protein is Phyllosphere-induced regulator PhyR (phyR) of Methylorubrum extorquens (strain ATCC 14718 / DSM 1338 / JCM 2805 / NCIMB 9133 / AM1) (Methylobacterium extorquens).